A 20-amino-acid polypeptide reads, in one-letter code: Isocitrate dehydrogenase [NADP] (20 aa).

This sequence belongs to the isocitrate and isopropylmalate dehydrogenases family. Mn(2+) is required as a cofactor. Requires Mg(2+) as cofactor.

It localises to the cytoplasm. It carries out the reaction D-threo-isocitrate + NADP(+) = 2-oxoglutarate + CO2 + NADPH. The protein is Isocitrate dehydrogenase [NADP] of Naegleria fowleri (Brain eating amoeba).